The sequence spans 589 residues: Aspartate--tRNA ligase 2 (589 aa).

An L-aspartate-binding site is contributed by E174. The interval 198 to 201 (QITK) is aspartate. R220 provides a ligand contact to L-aspartate. ATP is bound by residues 220-222 (RDE) and Q229. L-aspartate is bound at residue H443. Residue E477 participates in ATP binding. R484 provides a ligand contact to L-aspartate. Residue 529–532 (GLDR) participates in ATP binding.

It belongs to the class-II aminoacyl-tRNA synthetase family. Type 1 subfamily. Homodimer.

Its subcellular location is the cytoplasm. The enzyme catalyses tRNA(Asp) + L-aspartate + ATP = L-aspartyl-tRNA(Asp) + AMP + diphosphate. Functionally, catalyzes the attachment of L-aspartate to tRNA(Asp) in a two-step reaction: L-aspartate is first activated by ATP to form Asp-AMP and then transferred to the acceptor end of tRNA(Asp). The protein is Aspartate--tRNA ligase 2 of Streptococcus mutans serotype c (strain ATCC 700610 / UA159).